The sequence spans 321 residues: Putative pyridoxal kinase (321 aa).

2 residues coordinate substrate: S23 and Y144. ATP is bound by residues 203 to 204 (TS) and 230 to 242 (TFPR…VGTG). D243 serves as a coordination point for substrate.

The protein belongs to the pyridoxine kinase family. Zn(2+) is required as a cofactor. The cofactor is Mg(2+).

It carries out the reaction pyridoxal + ATP = pyridoxal 5'-phosphate + ADP + H(+). Its function is as follows. Required for synthesis of pyridoxal-5-phosphate from vitamin B6. In Caenorhabditis elegans, this protein is Putative pyridoxal kinase.